The following is a 485-amino-acid chain: MVAIDLGASSGRVMLASYYPGQQQLTLREVCRFTNQIKSIDGSDVWDIDAIEQSIREGLSQLDSEGIALDSIGIDSWGVDFVLLDKQGKRIGQPVSYRDSRTQGVMARAQQTLGSNAIYRRTGIQFLPFNTLYQLRALSEQQPHLLADVAHLLLIPDYLHYRLTGQLNWEYTNASTTQLLNIETGDWDSDLLAYAGVPAHWFAKPGKPGNTIGYWHSANGQQVPVVAVATHDTASAVLAAPLIDADAAYLSSGTWSLMGFESGTPLTHQQAQCSNITNEGGAEGRYRVLKNIMGLWLLQRATDELQIDDLPQLIEQAARQPACRSLINPNDSRFINPPNMCREIQNACREHQFPVPNTAAQLARCIFDSLAMLYRQVAQELATLRGRPISHLHIVGGGCQNQFLNQLCADACGLNVSMGPVEASTLGNIGSQLISLGEVADVTHYRRIVANNFPLHHLSPHDNSDFAAHWLQFQSLSQLPKELCI.

ATP is bound at residue 8–12; that stretch reads ASSGR. Substrate is bound by residues G78 and 231–233; that span reads HDT. D232 functions as the Proton acceptor in the catalytic mechanism. T254 provides a ligand contact to ATP. Residue N291 coordinates substrate. Q299 provides a ligand contact to ATP. A disulfide bond links C348 and C365. G397 contacts ATP. Cysteines 408 and 412 form a disulfide.

This sequence belongs to the rhamnulokinase family. Requires Mg(2+) as cofactor.

The enzyme catalyses L-rhamnulose + ATP = L-rhamnulose 1-phosphate + ADP + H(+). It participates in carbohydrate degradation; L-rhamnose degradation; glycerone phosphate from L-rhamnose: step 2/3. Functionally, involved in the catabolism of L-rhamnose (6-deoxy-L-mannose). Catalyzes the transfer of the gamma-phosphate group from ATP to the 1-hydroxyl group of L-rhamnulose to yield L-rhamnulose 1-phosphate. The polypeptide is Rhamnulokinase (Yersinia pestis bv. Antiqua (strain Antiqua)).